The primary structure comprises 466 residues: Oryzain beta chain (466 aa).

An N-terminal signal peptide occupies residues 1-21; sequence MAARAAAAAFLLLLIVGAATA. The propeptide at 22-140 is activation peptide; sequence APDMSIISYN…ERYRHDGVEE (119 aa). 3 disulfide bridges follow: C162–C205, C196–C238, and C296–C347. The active site involves C165. Catalysis depends on residues H302 and N322. N341 is a glycosylation site (N-linked (GlcNAc...) asparagine). The disordered stretch occupies residues 358–380; that stretch reads KSGANPPKPSPTPPTPPTPPPPS. Residues 362–466 constitute a propeptide, removed in mature form; it reads NPPKPSPTPP…KRTLAKLNTA (105 aa). The segment covering 363–380 has biased composition (pro residues); sequence PPKPSPTPPTPPTPPPPS. Intrachain disulfides connect C386/C398 and C392/C413. N389 carries an N-linked (GlcNAc...) asparagine glycan.

The protein belongs to the peptidase C1 family. In terms of tissue distribution, expressed only in seeds.

Its function is as follows. Probable thiol protease. This is Oryzain beta chain from Oryza sativa subsp. japonica (Rice).